A 154-amino-acid polypeptide reads, in one-letter code: Probable chemoreceptor glutamine deamidase CheD (154 aa).

This sequence belongs to the CheD family.

The enzyme catalyses L-glutaminyl-[protein] + H2O = L-glutamyl-[protein] + NH4(+). Functionally, probably deamidates glutamine residues to glutamate on methyl-accepting chemotaxis receptors (MCPs), playing an important role in chemotaxis. The chain is Probable chemoreceptor glutamine deamidase CheD from Methanococcus maripaludis (strain C5 / ATCC BAA-1333).